The sequence spans 77 residues: Acyl carrier protein (77 aa).

The Carrier domain occupies 2–77; sequence STIEERVKKI…EAIDYVVSHQ (76 aa). At Ser37 the chain carries O-(pantetheine 4'-phosphoryl)serine.

This sequence belongs to the acyl carrier protein (ACP) family. 4'-phosphopantetheine is transferred from CoA to a specific serine of apo-ACP by AcpS. This modification is essential for activity because fatty acids are bound in thioester linkage to the sulfhydryl of the prosthetic group.

Its subcellular location is the cytoplasm. The protein operates within lipid metabolism; fatty acid biosynthesis. Carrier of the growing fatty acid chain in fatty acid biosynthesis. This chain is Acyl carrier protein, found in Oceanospirillum linum.